The chain runs to 131 residues: D-ribose pyranase (131 aa).

The active-site Proton donor is His-20. Residues Asp-28, His-98, and 120–122 each bind substrate; that span reads YAN.

Belongs to the RbsD / FucU family. RbsD subfamily. As to quaternary structure, homodecamer.

The protein resides in the cytoplasm. It carries out the reaction beta-D-ribopyranose = beta-D-ribofuranose. The protein operates within carbohydrate metabolism; D-ribose degradation; D-ribose 5-phosphate from beta-D-ribopyranose: step 1/2. In terms of biological role, catalyzes the interconversion of beta-pyran and beta-furan forms of D-ribose. This is D-ribose pyranase from Bacillus cereus (strain 03BB102).